The chain runs to 609 residues: Proline--tRNA ligase (609 aa).

Belongs to the class-II aminoacyl-tRNA synthetase family. ProS type 1 subfamily. As to quaternary structure, homodimer.

The protein localises to the cytoplasm. It carries out the reaction tRNA(Pro) + L-proline + ATP = L-prolyl-tRNA(Pro) + AMP + diphosphate. In terms of biological role, catalyzes the attachment of proline to tRNA(Pro) in a two-step reaction: proline is first activated by ATP to form Pro-AMP and then transferred to the acceptor end of tRNA(Pro). As ProRS can inadvertently accommodate and process non-cognate amino acids such as alanine and cysteine, to avoid such errors it has two additional distinct editing activities against alanine. One activity is designated as 'pretransfer' editing and involves the tRNA(Pro)-independent hydrolysis of activated Ala-AMP. The other activity is designated 'posttransfer' editing and involves deacylation of mischarged Ala-tRNA(Pro). The misacylated Cys-tRNA(Pro) is not edited by ProRS. The sequence is that of Proline--tRNA ligase from Synechococcus sp. (strain JA-2-3B'a(2-13)) (Cyanobacteria bacterium Yellowstone B-Prime).